Reading from the N-terminus, the 1293-residue chain is Cilia- and flagella-associated protein 57 A (1293 aa).

Residues 72–113 form a WD 1 repeat; the sequence is PGTKGITCMTLSPSKRLLAWSEDCDSGIIVVFDLIKLDKLEK. Residues 117–143 are disordered; sequence QNYQEPSDKDKLDKQAEKDRRDRFEKE. A compositionally biased stretch (basic and acidic residues) spans 122–143; the sequence is PSDKDKLDKQAEKDRRDRFEKE. WD repeat units follow at residues 309–348, 359–398, 411–450, 535–574, and 700–739; these read PKNE…KNPY, DMKA…MQLN, FHSD…LENS, RGSG…PQKT, and SHFG…YQVK. Coiled coils occupy residues 756 to 1016, 1045 to 1079, and 1209 to 1285; these read RDQY…REKT, IKEL…FKRT, and INHL…QIQN.

Belongs to the CFAP57 family. In terms of assembly, forms a heterodimer with CFAP57C. Associates with components of the nexin-dynein regulatory complex (N-DRC) and the CFAP184:CFAP263 complex.

It is found in the cell projection. The protein resides in the cilium. Its function is as follows. Associates with components of the nexin-dynein regulatory complex (N-DRC), a key regulator of ciliary/flagellar motility, and might act as an inner dynein arm (IDA) hub or linkage. In Tetrahymena thermophila (strain SB210), this protein is Cilia- and flagella-associated protein 57 A (CFAP57A).